Reading from the N-terminus, the 624-residue chain is Ferredoxin-fold anticodon-binding domain-containing protein 1 (624 aa).

Residues 531-624 enclose the FDX-ACB domain; sequence LYPPCYVHDV…IQQHLYVIPR (94 aa).

The chain is Ferredoxin-fold anticodon-binding domain-containing protein 1 (FDXACB1) from Homo sapiens (Human).